The following is a 598-amino-acid chain: Elongation factor 4 (598 aa).

The tr-type G domain maps to 2-184; sequence KNIRNFSIIA…EIVRCIPPPV (183 aa). Residues 14 to 19 and 131 to 134 each bind GTP; these read DHGKST and NKID.

This sequence belongs to the TRAFAC class translation factor GTPase superfamily. Classic translation factor GTPase family. LepA subfamily.

It localises to the cell inner membrane. The enzyme catalyses GTP + H2O = GDP + phosphate + H(+). In terms of biological role, required for accurate and efficient protein synthesis under certain stress conditions. May act as a fidelity factor of the translation reaction, by catalyzing a one-codon backward translocation of tRNAs on improperly translocated ribosomes. Back-translocation proceeds from a post-translocation (POST) complex to a pre-translocation (PRE) complex, thus giving elongation factor G a second chance to translocate the tRNAs correctly. Binds to ribosomes in a GTP-dependent manner. The chain is Elongation factor 4 from Psychromonas ingrahamii (strain DSM 17664 / CCUG 51855 / 37).